A 242-amino-acid chain; its full sequence is Probable transcriptional regulatory protein EF_0663 (242 aa).

Residues 1–14 (MSGHSKWSNIQGRK) are compositionally biased toward polar residues. The interval 1–22 (MSGHSKWSNIQGRKNAQDAKRG) is disordered.

The protein belongs to the TACO1 family.

The protein resides in the cytoplasm. This is Probable transcriptional regulatory protein EF_0663 from Enterococcus faecalis (strain ATCC 700802 / V583).